The following is a 244-amino-acid chain: Short-chain dehydrogenase/reductase family member NovK (244 aa).

NADP(+) contacts are provided by residues 9–12, 59–60, and 154–158; these read GGGE, EL, and RPVLD.

This sequence belongs to the short-chain dehydrogenases/reductases (SDR) family. In terms of assembly, heterotetramer; the NovJ(2)K(2) heterotetramer is composed of subunits of 2 NovJ and 2 subunits of NovK.

It participates in antibiotic biosynthesis; novobiocin biosynthesis. Functionally, non-catalytic subunit of the NovJ(2)K(2) heterotetramer that catalyzes the NADPH-dependent reduction of the tyrosyl moiety of L-beta-OH-Tyr-S-NovH intermediate to yield the tethered beta-ketotyrosyl-S-NovH in the novobiocin biosynthesis pathway. Novobiocin is an aminocoumarin family antibiotic that targets bacterial DNA gyrases. The chain is Short-chain dehydrogenase/reductase family member NovK (novK) from Streptomyces niveus (Streptomyces spheroides).